The following is a 178-amino-acid chain: tRNA (cytidine(56)-2'-O)-methyltransferase (178 aa).

Residues leucine 84, 112-116 (GAEKV), and 130-137 (VGNQPHSE) contribute to the S-adenosyl-L-methionine site.

It belongs to the aTrm56 family. In terms of assembly, homodimer.

The protein resides in the cytoplasm. The enzyme catalyses cytidine(56) in tRNA + S-adenosyl-L-methionine = 2'-O-methylcytidine(56) in tRNA + S-adenosyl-L-homocysteine + H(+). In terms of biological role, specifically catalyzes the AdoMet-dependent 2'-O-ribose methylation of cytidine at position 56 in tRNAs. In Methanocella arvoryzae (strain DSM 22066 / NBRC 105507 / MRE50), this protein is tRNA (cytidine(56)-2'-O)-methyltransferase.